A 267-amino-acid chain; its full sequence is Ribosomal RNA small subunit methyltransferase A (267 aa).

The S-adenosyl-L-methionine site is built by Asn-16, Leu-18, Gly-43, Glu-64, Asp-88, and Asn-109.

The protein belongs to the class I-like SAM-binding methyltransferase superfamily. rRNA adenine N(6)-methyltransferase family. RsmA subfamily.

It is found in the cytoplasm. The enzyme catalyses adenosine(1518)/adenosine(1519) in 16S rRNA + 4 S-adenosyl-L-methionine = N(6)-dimethyladenosine(1518)/N(6)-dimethyladenosine(1519) in 16S rRNA + 4 S-adenosyl-L-homocysteine + 4 H(+). Its function is as follows. Specifically dimethylates two adjacent adenosines (A1518 and A1519) in the loop of a conserved hairpin near the 3'-end of 16S rRNA in the 30S particle. May play a critical role in biogenesis of 30S subunits. The chain is Ribosomal RNA small subunit methyltransferase A from Acidithiobacillus ferrooxidans (strain ATCC 23270 / DSM 14882 / CIP 104768 / NCIMB 8455) (Ferrobacillus ferrooxidans (strain ATCC 23270)).